Consider the following 358-residue polypeptide: 3-dehydroquinate synthase (358 aa).

NAD(+) is bound by residues 69 to 74, 103 to 107, 127 to 128, Lys-140, Lys-149, and 167 to 170; these read DGEQYK, GVIGD, TT, and TLNT. Residues Glu-182, His-245, and His-262 each coordinate Zn(2+).

The protein belongs to the sugar phosphate cyclases superfamily. Dehydroquinate synthase family. Co(2+) is required as a cofactor. The cofactor is Zn(2+). NAD(+) serves as cofactor.

Its subcellular location is the cytoplasm. It carries out the reaction 7-phospho-2-dehydro-3-deoxy-D-arabino-heptonate = 3-dehydroquinate + phosphate. The protein operates within metabolic intermediate biosynthesis; chorismate biosynthesis; chorismate from D-erythrose 4-phosphate and phosphoenolpyruvate: step 2/7. Functionally, catalyzes the conversion of 3-deoxy-D-arabino-heptulosonate 7-phosphate (DAHP) to dehydroquinate (DHQ). In Hydrogenovibrio crunogenus (strain DSM 25203 / XCL-2) (Thiomicrospira crunogena), this protein is 3-dehydroquinate synthase.